The following is a 646-amino-acid chain: UvrABC system protein B (646 aa).

The region spanning 29 to 411 (LEKNPEKSKQ…SNQVVEQIIR (383 aa)) is the Helicase ATP-binding domain. Position 42-49 (42-49 (GVTGSGKT)) interacts with ATP. The Beta-hairpin signature appears at 95 to 118 (YYDYYQPESYIPQKDQYIEKDAQI). A Helicase C-terminal domain is found at 428–590 (QVEDIIKETE…ITPQTIVKPI (163 aa)). In terms of domain architecture, UVR spans 609 to 644 (PNVIVELEAEMYEAAEALEFEKAIKIRDTIAKLKKK).

The protein belongs to the UvrB family. As to quaternary structure, forms a heterotetramer with UvrA during the search for lesions. Interacts with UvrC in an incision complex.

It localises to the cytoplasm. Functionally, the UvrABC repair system catalyzes the recognition and processing of DNA lesions. A damage recognition complex composed of 2 UvrA and 2 UvrB subunits scans DNA for abnormalities. Upon binding of the UvrA(2)B(2) complex to a putative damaged site, the DNA wraps around one UvrB monomer. DNA wrap is dependent on ATP binding by UvrB and probably causes local melting of the DNA helix, facilitating insertion of UvrB beta-hairpin between the DNA strands. Then UvrB probes one DNA strand for the presence of a lesion. If a lesion is found the UvrA subunits dissociate and the UvrB-DNA preincision complex is formed. This complex is subsequently bound by UvrC and the second UvrB is released. If no lesion is found, the DNA wraps around the other UvrB subunit that will check the other stand for damage. The polypeptide is UvrABC system protein B (Methanococcus maripaludis (strain DSM 14266 / JCM 13030 / NBRC 101832 / S2 / LL)).